A 193-amino-acid polypeptide reads, in one-letter code: Potassium-transporting ATPase KdpC subunit (193 aa).

Residues 11–31 (FTLVFMVLLGLVYPFVMTGIA) traverse the membrane as a helical segment.

The protein belongs to the KdpC family. As to quaternary structure, the system is composed of three essential subunits: KdpA, KdpB and KdpC.

It is found in the cell membrane. Part of the high-affinity ATP-driven potassium transport (or Kdp) system, which catalyzes the hydrolysis of ATP coupled with the electrogenic transport of potassium into the cytoplasm. This subunit acts as a catalytic chaperone that increases the ATP-binding affinity of the ATP-hydrolyzing subunit KdpB by the formation of a transient KdpB/KdpC/ATP ternary complex. The polypeptide is Potassium-transporting ATPase KdpC subunit (Caldanaerobacter subterraneus subsp. tengcongensis (strain DSM 15242 / JCM 11007 / NBRC 100824 / MB4) (Thermoanaerobacter tengcongensis)).